Consider the following 332-residue polypeptide: Malate dehydrogenase 1, cytoplasmic (332 aa).

NAD(+) is bound by residues 16-17 (QI) and Asp43. Methionine sulfoxide is present on Met56. Gly90 contacts NAD(+). Met97 carries the methionine sulfoxide modification. Residue Arg99 participates in oxaloacetate binding. Gln113 contacts NAD(+). Lys119 participates in a covalent cross-link: Glycyl lysine isopeptide (Lys-Gly) (interchain with G-Cter in ubiquitin). Asn132 provides a ligand contact to NAD(+). Oxaloacetate is bound by residues Asn132, Arg163, His188, and Ser243. His188 serves as the catalytic Proton acceptor.

It belongs to the LDH/MDH superfamily. MDH type 2 family. As to quaternary structure, forms a homodimer. Forms a disulfide-linked homodimer upon oxidation. Interacts with 14-3-3-like proteins GRF1 GRF3 and GRF8. Interacts with TRX1, TRX2, TRX3, TRX4 and TRX5. As to expression, expressed in rosette leaves.

It localises to the cytoplasm. The enzyme catalyses (S)-malate + NAD(+) = oxaloacetate + NADH + H(+). With respect to regulation, decreased activity upon treatment with hydrogen peroxide. Catalyzes a reversible NAD-dependent dehydrogenase reaction involved in central metabolism and redox homeostasis between organellar compartments. The sequence is that of Malate dehydrogenase 1, cytoplasmic (MDH1) from Arabidopsis thaliana (Mouse-ear cress).